The chain runs to 328 residues: 4-hydroxythreonine-4-phosphate dehydrogenase (328 aa).

Residues histidine 135 and threonine 136 each contribute to the substrate site. The a divalent metal cation site is built by histidine 165, histidine 210, and histidine 265. 3 residues coordinate substrate: lysine 273, asparagine 282, and arginine 291.

This sequence belongs to the PdxA family. As to quaternary structure, homodimer. The cofactor is Zn(2+). Requires Mg(2+) as cofactor. Co(2+) is required as a cofactor.

Its subcellular location is the cytoplasm. The catalysed reaction is 4-(phosphooxy)-L-threonine + NAD(+) = 3-amino-2-oxopropyl phosphate + CO2 + NADH. Its pathway is cofactor biosynthesis; pyridoxine 5'-phosphate biosynthesis; pyridoxine 5'-phosphate from D-erythrose 4-phosphate: step 4/5. Functionally, catalyzes the NAD(P)-dependent oxidation of 4-(phosphooxy)-L-threonine (HTP) into 2-amino-3-oxo-4-(phosphooxy)butyric acid which spontaneously decarboxylates to form 3-amino-2-oxopropyl phosphate (AHAP). The chain is 4-hydroxythreonine-4-phosphate dehydrogenase from Pseudomonas aeruginosa (strain ATCC 15692 / DSM 22644 / CIP 104116 / JCM 14847 / LMG 12228 / 1C / PRS 101 / PAO1).